The sequence spans 253 residues: Tryptophan synthase alpha chain (253 aa).

Catalysis depends on proton acceptor residues Glu48 and Asp59.

Belongs to the TrpA family. As to quaternary structure, tetramer of two alpha and two beta chains.

The enzyme catalyses (1S,2R)-1-C-(indol-3-yl)glycerol 3-phosphate + L-serine = D-glyceraldehyde 3-phosphate + L-tryptophan + H2O. The protein operates within amino-acid biosynthesis; L-tryptophan biosynthesis; L-tryptophan from chorismate: step 5/5. Its function is as follows. The alpha subunit is responsible for the aldol cleavage of indoleglycerol phosphate to indole and glyceraldehyde 3-phosphate. The sequence is that of Tryptophan synthase alpha chain from Caldicellulosiruptor saccharolyticus (strain ATCC 43494 / DSM 8903 / Tp8T 6331).